A 196-amino-acid chain; its full sequence is ATP-dependent Clp protease proteolytic subunit (196 aa).

The Nucleophile role is filled by Ser96. His121 is a catalytic residue.

Belongs to the peptidase S14 family. As to quaternary structure, fourteen ClpP subunits assemble into 2 heptameric rings which stack back to back to give a disk-like structure with a central cavity, resembling the structure of eukaryotic proteasomes.

It is found in the cytoplasm. It catalyses the reaction Hydrolysis of proteins to small peptides in the presence of ATP and magnesium. alpha-casein is the usual test substrate. In the absence of ATP, only oligopeptides shorter than five residues are hydrolyzed (such as succinyl-Leu-Tyr-|-NHMec, and Leu-Tyr-Leu-|-Tyr-Trp, in which cleavage of the -Tyr-|-Leu- and -Tyr-|-Trp bonds also occurs).. In terms of biological role, cleaves peptides in various proteins in a process that requires ATP hydrolysis. Has a chymotrypsin-like activity. Plays a major role in the degradation of misfolded proteins. In Streptococcus salivarius, this protein is ATP-dependent Clp protease proteolytic subunit.